A 181-amino-acid chain; its full sequence is uncharacterized protein (181 aa).

2 stretches are compositionally biased toward gly residues: residues 143-156 (RRGG…GPRG) and 170-181 (GPFGPGYRGPRF). Residues 143-181 (RRGGRYGDFGGPRGPRGPRNDGPFGPFGPFGPGYRGPRF) are disordered.

As to quaternary structure, has been detected in a cytochrome bc1-aa3 supercomplex; its deletion however leaves complex activity unaffected.

This is an uncharacterized protein from Corynebacterium glutamicum (strain ATCC 13032 / DSM 20300 / JCM 1318 / BCRC 11384 / CCUG 27702 / LMG 3730 / NBRC 12168 / NCIMB 10025 / NRRL B-2784 / 534).